The primary structure comprises 237 residues: uncharacterized protein (237 aa).

21–28 (GCDGSGKS) contacts ATP.

The protein to E.coli YghR and YghT.

This is an uncharacterized protein from Escherichia coli (strain K12).